The chain runs to 841 residues: DNA ligase (841 aa).

Residues 33 to 37 (DAQYD), 82 to 83 (SL), and E114 contribute to the NAD(+) site. K116 acts as the N6-AMP-lysine intermediate in catalysis. NAD(+)-binding residues include R137, E174, K300, and K324. C418, C421, C436, and C442 together coordinate Zn(2+). Residues 758 to 841 (EKTGPLDGQT…AFLGEHGQQR (84 aa)) form the BRCT domain.

Belongs to the NAD-dependent DNA ligase family. LigA subfamily. Requires Mg(2+) as cofactor. It depends on Mn(2+) as a cofactor.

It catalyses the reaction NAD(+) + (deoxyribonucleotide)n-3'-hydroxyl + 5'-phospho-(deoxyribonucleotide)m = (deoxyribonucleotide)n+m + AMP + beta-nicotinamide D-nucleotide.. Its function is as follows. DNA ligase that catalyzes the formation of phosphodiester linkages between 5'-phosphoryl and 3'-hydroxyl groups in double-stranded DNA using NAD as a coenzyme and as the energy source for the reaction. It is essential for DNA replication and repair of damaged DNA. This Xanthomonas oryzae pv. oryzae (strain MAFF 311018) protein is DNA ligase.